Reading from the N-terminus, the 251-residue chain is Aliphatic sulfonates import ATP-binding protein SsuB (251 aa).

The ABC transporter domain maps to 3–231; that stretch reads VSINEVSKYF…PRNKTSQSFQ (229 aa). An ATP-binding site is contributed by 39–46; sequence GPSGCGKS.

The protein belongs to the ABC transporter superfamily. Aliphatic sulfonates importer (TC 3.A.1.17.2) family. As to quaternary structure, the complex is composed of two ATP-binding proteins (SsuB), two transmembrane proteins (SsuC) and a solute-binding protein (SsuA).

The protein resides in the cell membrane. The enzyme catalyses ATP + H2O + aliphatic sulfonate-[sulfonate-binding protein]Side 1 = ADP + phosphate + aliphatic sulfonateSide 2 + [sulfonate-binding protein]Side 1.. In terms of biological role, part of the ABC transporter complex SsuABC involved in aliphatic sulfonates import. Responsible for energy coupling to the transport system. In Bacillus anthracis, this protein is Aliphatic sulfonates import ATP-binding protein SsuB.